Consider the following 290-residue polypeptide: Poly-beta-1,6-N-acetyl-D-glucosamine N-deacetylase (290 aa).

A signal peptide spans 1–28 (MKYRKLIILVLSILIILPVSTLDGHHIA). The NodB homology domain occupies 114–290 (RSVWINFDDM…KRWDGFHEKD (177 aa)).

This sequence belongs to the polysaccharide deacetylase family.

It localises to the secreted. The protein localises to the cell wall. Catalyzes the N-deacetylation of poly-beta-1,6-N-acetyl-D-glucosamine (PNAG, also referred to as PIA), a biofilm adhesin polysaccharide. N-deacetylation is crucial for attachment of the polysaccharide to the bacterial cell surface; it leads to the introduction of positive charges in the otherwise neutral PIA polymer, allowing electrostatic interactions. This is Poly-beta-1,6-N-acetyl-D-glucosamine N-deacetylase (icaB) from Staphylococcus aureus (strain MRSA252).